The sequence spans 229 residues: Large ribosomal subunit protein uL1 (229 aa).

It belongs to the universal ribosomal protein uL1 family. Part of the 50S ribosomal subunit.

In terms of biological role, binds directly to 23S rRNA. The L1 stalk is quite mobile in the ribosome, and is involved in E site tRNA release. Functionally, protein L1 is also a translational repressor protein, it controls the translation of the L11 operon by binding to its mRNA. The polypeptide is Large ribosomal subunit protein uL1 (Lactococcus lactis subsp. cremoris (strain MG1363)).